A 285-amino-acid chain; its full sequence is NAC domain-containing protein 92 (285 aa).

The region spanning 20–170 is the NAC domain; the sequence is LPPGFRFHPT…EWVICRVFQK (151 aa). A DNA-binding region spans residues 117–176; it reads VGMKKTLVFYKGRAPKGVKTNWVMHEYRLEGKYCIENLPQTAKNEWVICRVFQKRADGTK.

As to quaternary structure, forms homodimers. Interacts with GLK1 and GLK2. Interacts with NLA. In terms of processing, ubiquitinated by NLA. Ubiquitination of NAC92 leads to its degradation by the proteasome during leaf senescence under nitrogen deficiency. As to expression, mostly expressed in roots and flowers, and, to a lower extent, in shoots and leaves. Particularly expressed in old and senescing tissues.

It localises to the nucleus. In terms of biological role, transcription activator that binds to DNA in promoters of target genes on a specific bipartite motif 5'-[ACG][CA]GT[AG](5-6n)[CT]AC[AG]-3'. Promotes lateral root development. Triggers the expression of senescence-associated genes during age-, salt- and dark-induced senescence through a regulatory network that may involve cross-talk with salt- and H(2)O(2)-dependent signaling pathways. Also regulates genes during seed germination. Positively regulates aging-induced cell death. Involved in age-related resistance (ARR) against Pseudomonas syringae pv. tomato and Hyaloperonospora arabidopsidis. Antagonizes GLK1 and GLK2 transcriptional activity, shifting the balance from chloroplast maintenance towards deterioration during leaf senescence. Promotes the expression of senescence-associated genes, including ENDO1/BFN1, SWEET15/SAG29 and SINA1/At3g13672, during senescence onset. The protein is NAC domain-containing protein 92 of Arabidopsis thaliana (Mouse-ear cress).